The chain runs to 251 residues: 2,3-bisphosphoglycerate-dependent phosphoglycerate mutase (251 aa).

Substrate contacts are provided by residues 11–18 (RHGNSDWN), 24–25 (TG), Arg-63, 90–93 (ERHY), Lys-101, 117–118 (RR), and 185–186 (GN). His-12 functions as the Tele-phosphohistidine intermediate in the catalytic mechanism. Glu-90 functions as the Proton donor/acceptor in the catalytic mechanism. Positions 117–142 (RRSFDVPPPPIDDDDEYSQSRDPRYA) are disordered.

Belongs to the phosphoglycerate mutase family. BPG-dependent PGAM subfamily.

It carries out the reaction (2R)-2-phosphoglycerate = (2R)-3-phosphoglycerate. Its pathway is carbohydrate degradation; glycolysis; pyruvate from D-glyceraldehyde 3-phosphate: step 3/5. Functionally, catalyzes the interconversion of 2-phosphoglycerate and 3-phosphoglycerate. This Clavibacter michiganensis subsp. michiganensis (strain NCPPB 382) protein is 2,3-bisphosphoglycerate-dependent phosphoglycerate mutase.